The primary structure comprises 312 residues: Pyridoxal kinase (312 aa).

An N-acetylmethionine modification is found at Met1. Ser12 and Thr47 together coordinate pyridoxal. Position 47 (Thr47) interacts with pyridoxal 5'-phosphate. At Ser59 the chain carries Phosphoserine. Asp113 is an ATP binding site. Asp113 provides a ligand contact to Na(+). A Mg(2+)-binding site is contributed by Asp118. Thr148 is a Na(+) binding site. ATP contacts are provided by residues 150 to 153 (NQFE) and 186 to 187 (TS). Na(+) is bound at residue Thr186. Residue Ser213 is modified to Phosphoserine. Residues 226–228 (VDA) and Thr233 each bind ATP. 234–235 (GD) is a binding site for pyridoxal 5'-phosphate. Residue Asp235 is the Proton acceptor of the active site. Position 285 is a phosphoserine (Ser285).

This sequence belongs to the pyridoxine kinase family. As to quaternary structure, homodimer. Zn(2+) is required as a cofactor. Mg(2+) serves as cofactor.

Its subcellular location is the cytoplasm. The protein localises to the cytosol. The enzyme catalyses pyridoxal + ATP = pyridoxal 5'-phosphate + ADP + H(+). It catalyses the reaction pyridoxamine + ATP = pyridoxamine 5'-phosphate + ADP + H(+). It carries out the reaction pyridoxine + ATP = pyridoxine 5'-phosphate + ADP + H(+). The protein operates within cofactor metabolism; pyridoxal 5'-phosphate salvage; pyridoxal 5'-phosphate from pyridoxal: step 1/1. It functions in the pathway cofactor metabolism; pyridoxal 5'-phosphate salvage; pyridoxine 5'-phosphate from pyridoxine: step 1/1. It participates in cofactor metabolism; pyridoxal 5'-phosphate salvage; pyridoxamine 5'-phosphate from pyridoxamine: step 1/1. Activity is increased in the presence of K(+)or Na(+). In terms of biological role, catalyzes the phosphorylation of the dietary vitamin B6 vitamers pyridoxal (PL), pyridoxine (PN) and pyridoxamine (PM) to form pyridoxal 5'-phosphate (PLP), pyridoxine 5'-phosphate (PNP) and pyridoxamine 5'-phosphate (PMP), respectively. PLP is the active form of vitamin B6, and acts as a cofactor for over 140 different enzymatic reactions. The polypeptide is Pyridoxal kinase (PDXK) (Bos taurus (Bovine)).